The primary structure comprises 303 residues: MAKKEEYVRKPDWLKIKLNTNETYTGLKKMMREKNLHTVCEEAKCPNIHECWAVRKTATFMILGDVCTRACRFCAVKTGLPNELDLQEPERVAESVEIMGLKHAVITAVARDDLKDGGAGVFAETVRAVRRRNPFCTIEVLPSDMMGNDDNLKTLMDARPNILNHNIETVRRLTPRVRARATYERSLEFLRRAKEMQPDIPTKSSLMIGLGETKDEIIETMDDLRANNVDIMTIGQYLQPTKKHLKVQKYYHPDEFAELKEIALSKGFSHCEAGPLVRSSYHADEQVNEAQVREEARKAAAKS.

Cys-40, Cys-45, Cys-51, Cys-67, Cys-71, Cys-74, and Ser-280 together coordinate [4Fe-4S] cluster. The Radical SAM core domain occupies 53–269 (AVRKTATFMI…KEIALSKGFS (217 aa)).

It belongs to the radical SAM superfamily. Lipoyl synthase family. The cofactor is [4Fe-4S] cluster.

The protein resides in the cytoplasm. It catalyses the reaction [[Fe-S] cluster scaffold protein carrying a second [4Fe-4S](2+) cluster] + N(6)-octanoyl-L-lysyl-[protein] + 2 oxidized [2Fe-2S]-[ferredoxin] + 2 S-adenosyl-L-methionine + 4 H(+) = [[Fe-S] cluster scaffold protein] + N(6)-[(R)-dihydrolipoyl]-L-lysyl-[protein] + 4 Fe(3+) + 2 hydrogen sulfide + 2 5'-deoxyadenosine + 2 L-methionine + 2 reduced [2Fe-2S]-[ferredoxin]. It participates in protein modification; protein lipoylation via endogenous pathway; protein N(6)-(lipoyl)lysine from octanoyl-[acyl-carrier-protein]. Catalyzes the radical-mediated insertion of two sulfur atoms into the C-6 and C-8 positions of the octanoyl moiety bound to the lipoyl domains of lipoate-dependent enzymes, thereby converting the octanoylated domains into lipoylated derivatives. This is Lipoyl synthase from Halalkalibacterium halodurans (strain ATCC BAA-125 / DSM 18197 / FERM 7344 / JCM 9153 / C-125) (Bacillus halodurans).